Here is a 97-residue protein sequence, read N- to C-terminus: SAGA-associated factor 11 (97 aa).

The SGF11-type zinc finger occupies 70–91 (IECNVCGREVSGNRFAAHLVRC).

Belongs to the SGF11 family. As to quaternary structure, component of the 1.8 MDa SAGA transcription coactivator-HAT complex. SAGA is built of 5 distinct domains with specialized functions. Within the SAGA complex, SUS1, SGF11, SGF73 and UBP8 form an additional subcomplex of SAGA called the DUB module (deubiquitination module). Interacts directly with SGF73, SUS1 and UBP8.

The protein resides in the nucleus. Functionally, functions as a component of the transcription regulatory histone acetylation (HAT) complex SAGA. At the promoters, SAGA is required for recruitment of the basal transcription machinery. It influences RNA polymerase II transcriptional activity through different activities such as TBP interaction and promoter selectivity, interaction with transcription activators, and chromatin modification through histone acetylation and deubiquitination. SAGA acetylates nucleosomal histone H3 to some extent (to form H3K9ac, H3K14ac, H3K18ac and H3K23ac). SAGA interacts with DNA via upstream activating sequences (UASs). Involved in transcriptional regulation of a subset of SAGA-regulated genes. Within the SAGA complex, participates in a subcomplex, that specifically deubiquitinates histones H2B. The protein is SAGA-associated factor 11 of Kluyveromyces lactis (strain ATCC 8585 / CBS 2359 / DSM 70799 / NBRC 1267 / NRRL Y-1140 / WM37) (Yeast).